We begin with the raw amino-acid sequence, 154 residues long: Large ribosomal subunit protein uL13 (154 aa).

The protein belongs to the universal ribosomal protein uL13 family. In terms of assembly, part of the 50S ribosomal subunit.

Functionally, this protein is one of the early assembly proteins of the 50S ribosomal subunit, although it is not seen to bind rRNA by itself. It is important during the early stages of 50S assembly. This Brucella suis (strain ATCC 23445 / NCTC 10510) protein is Large ribosomal subunit protein uL13.